We begin with the raw amino-acid sequence, 332 residues long: Fe(3+) dicitrate transport system permease protein FecC (332 aa).

At 1-7 the chain is on the cytoplasmic side; the sequence is MTAIKHP. A helical membrane pass occupies residues 8-28; sequence VLLWGLPVAALIIIFWLSLFC. Residues 29–64 are Periplasmic-facing; the sequence is YSAIPVSGADATRALLPGHTPTLPEALVQNLRLPRS. The helical transmembrane segment at 65–85 threads the bilayer; the sequence is LVAVLIGASLALAGTLLQTLT. Residues 86-100 are Cytoplasmic-facing; that stretch reads HNPMASPSLLGINSG. A helical transmembrane segment spans residues 101–121; it reads AALAMALTSALSPTPIAGYSL. A topological domain (periplasmic) is located at residue Ser-122. A helical transmembrane segment spans residues 123-143; it reads FIAACGGGVSWLLVMTAGGGF. Residues 144 to 151 are Cytoplasmic-facing; sequence RHTHDRNK. The chain crosses the membrane as a helical span at residues 152–172; it reads LILAGIALSAFCMGLTRITLL. Topologically, residues 173–199 are periplasmic; sequence LAEDHAYGIFYWLAGGVSHARWQDVWQ. Residues 200-220 form a helical membrane-spanning segment; sequence LLPVVVTAVPVVLLLANQLNL. The Cytoplasmic segment spans residues 221–244; that stretch reads LNLSDSTAHTLGVNLTRLRLVINM. Residues 245-265 form a helical membrane-spanning segment; that stretch reads LVLLLVGACVSVAGPVAFIGL. The Periplasmic segment spans residues 266-307; the sequence is LVPHLARFWAGFDQRNVLPVSMLLGATLMLLADVLARALAFP. The helical transmembrane segment at 308–328 threads the bilayer; sequence GDLPAGAVLALIGSPCFVWLV. Residues 329 to 332 lie on the Cytoplasmic side of the membrane; sequence RRRG.

This sequence belongs to the binding-protein-dependent transport system permease family. FecCD subfamily. The complex is composed of two ATP-binding proteins (FecE), two transmembrane proteins (FecC and FecD) and a solute-binding protein (FecB). Interacts with FecB.

It localises to the cell inner membrane. Part of the ABC transporter complex FecBCDE involved in citrate-dependent Fe(3+) uptake. Probably responsible for the translocation of the substrate across the membrane. The sequence is that of Fe(3+) dicitrate transport system permease protein FecC from Escherichia coli (strain K12).